The sequence spans 401 residues: Enoyl-[acyl-carrier-protein] reductase [NADH] (401 aa).

Residues 48-53 (GSSSGY), 74-75 (FE), 111-112 (DA), and 139-140 (LA) contribute to the NAD(+) site. Position 225 (Y225) interacts with substrate. Y235 functions as the Proton donor in the catalytic mechanism. Residues K244 and 273–275 (VVT) each bind NAD(+).

Belongs to the TER reductase family. In terms of assembly, monomer.

The enzyme catalyses a 2,3-saturated acyl-[ACP] + NAD(+) = a (2E)-enoyl-[ACP] + NADH + H(+). It functions in the pathway lipid metabolism; fatty acid biosynthesis. Involved in the final reduction of the elongation cycle of fatty acid synthesis (FAS II). Catalyzes the reduction of a carbon-carbon double bond in an enoyl moiety that is covalently linked to an acyl carrier protein (ACP). This chain is Enoyl-[acyl-carrier-protein] reductase [NADH], found in Shewanella putrefaciens (strain CN-32 / ATCC BAA-453).